The following is a 124-amino-acid chain: Small ribosomal subunit protein uS12 (124 aa).

D89 is subject to 3-methylthioaspartic acid.

The protein belongs to the universal ribosomal protein uS12 family. Part of the 30S ribosomal subunit. Contacts proteins S8 and S17. May interact with IF1 in the 30S initiation complex.

In terms of biological role, with S4 and S5 plays an important role in translational accuracy. Its function is as follows. Interacts with and stabilizes bases of the 16S rRNA that are involved in tRNA selection in the A site and with the mRNA backbone. Located at the interface of the 30S and 50S subunits, it traverses the body of the 30S subunit contacting proteins on the other side and probably holding the rRNA structure together. The combined cluster of proteins S8, S12 and S17 appears to hold together the shoulder and platform of the 30S subunit. The polypeptide is Small ribosomal subunit protein uS12 (Buchnera aphidicola subsp. Acyrthosiphon pisum (strain 5A)).